Consider the following 146-residue polypeptide: Large ribosomal subunit protein uL15 (146 aa).

Basic and acidic residues predominate over residues 1–13 (MKLHELYPAEGSR). The tract at residues 1–55 (MKLHELYPAEGSRKVRNRVGRGAATGNGKTSGRGQKGQKARSGGKVRPGFEGGQL) is disordered. Gly residues predominate over residues 23–35 (AATGNGKTSGRGQ).

The protein belongs to the universal ribosomal protein uL15 family. Part of the 50S ribosomal subunit.

Its function is as follows. Binds to the 23S rRNA. The polypeptide is Large ribosomal subunit protein uL15 (Staphylococcus carnosus (strain TM300)).